Reading from the N-terminus, the 418-residue chain is Aspartate aminotransferase, cytoplasmic (418 aa).

Serine 2 is subject to N-acetylserine. 3 residues coordinate L-aspartate: glycine 38, tryptophan 135, and asparagine 188. The residue at position 255 (lysine 255) is an N6-(pyridoxal phosphate)lysine. Arginine 387 lines the L-aspartate pocket. Serine 389 is modified (phosphoserine).

This sequence belongs to the class-I pyridoxal-phosphate-dependent aminotransferase family. In terms of assembly, homodimer. Pyridoxal 5'-phosphate is required as a cofactor.

Its subcellular location is the cytoplasm. It is found in the peroxisome. It catalyses the reaction L-aspartate + 2-oxoglutarate = oxaloacetate + L-glutamate. Plays a key role in amino acid metabolism. This Saccharomyces cerevisiae (strain ATCC 204508 / S288c) (Baker's yeast) protein is Aspartate aminotransferase, cytoplasmic (AAT2).